Here is a 416-residue protein sequence, read N- to C-terminus: Serine hydroxymethyltransferase (416 aa).

Residues L121 and 125-127 (GHL) contribute to the (6S)-5,6,7,8-tetrahydrofolate site. An N6-(pyridoxal phosphate)lysine modification is found at K229.

It belongs to the SHMT family. In terms of assembly, homodimer. Requires pyridoxal 5'-phosphate as cofactor.

Its subcellular location is the cytoplasm. It catalyses the reaction (6R)-5,10-methylene-5,6,7,8-tetrahydrofolate + glycine + H2O = (6S)-5,6,7,8-tetrahydrofolate + L-serine. It participates in one-carbon metabolism; tetrahydrofolate interconversion. Its pathway is amino-acid biosynthesis; glycine biosynthesis; glycine from L-serine: step 1/1. In terms of biological role, catalyzes the reversible interconversion of serine and glycine with tetrahydrofolate (THF) serving as the one-carbon carrier. This reaction serves as the major source of one-carbon groups required for the biosynthesis of purines, thymidylate, methionine, and other important biomolecules. Also exhibits THF-independent aldolase activity toward beta-hydroxyamino acids, producing glycine and aldehydes, via a retro-aldol mechanism. This Neisseria gonorrhoeae (strain NCCP11945) protein is Serine hydroxymethyltransferase.